A 161-amino-acid polypeptide reads, in one-letter code: Cytochrome c-type biogenesis protein CcmE (161 aa).

Over 1-8 (MNPRRKKR) the chain is Cytoplasmic. A helical; Signal-anchor for type II membrane protein transmembrane segment spans residues 9 to 29 (LTLAVALVFGLGATIGLMLYA). Over 30-161 (LSQNMDLFYT…SDEQKQGRVQ (132 aa)) the chain is Periplasmic. The heme site is built by His129 and Tyr133.

The protein belongs to the CcmE/CycJ family.

Its subcellular location is the cell inner membrane. Heme chaperone required for the biogenesis of c-type cytochromes. Transiently binds heme delivered by CcmC and transfers the heme to apo-cytochromes in a process facilitated by CcmF and CcmH. The polypeptide is Cytochrome c-type biogenesis protein CcmE (Photobacterium profundum (strain SS9)).